The sequence spans 156 residues: MRSSAKQEELVRAFKALLKEEKFSSQGEIVVALQEQGFDNINQSKVSRMLTKFGAVRTRNAKMEMVYCLPAELGVPTTSSPLKNLVLDIDYNDAVVVIHTSPGAAQLIARLLDSLGKAEGILGTIAGDDTIFTTPASGFSVKELYEAILELFEQEL.

It belongs to the ArgR family.

The protein resides in the cytoplasm. It functions in the pathway amino-acid biosynthesis; L-arginine biosynthesis [regulation]. Regulates arginine biosynthesis genes. The sequence is that of Arginine repressor from Escherichia fergusonii (strain ATCC 35469 / DSM 13698 / CCUG 18766 / IAM 14443 / JCM 21226 / LMG 7866 / NBRC 102419 / NCTC 12128 / CDC 0568-73).